We begin with the raw amino-acid sequence, 357 residues long: UDP-N-acetylglucosamine--N-acetylmuramyl-(pentapeptide) pyrophosphoryl-undecaprenol N-acetylglucosamine transferase (357 aa).

UDP-N-acetyl-alpha-D-glucosamine contacts are provided by residues 12–14 (TGG), N124, R163, S189, I243, 262–267 (ALTVSE), and Q288.

It belongs to the glycosyltransferase 28 family. MurG subfamily.

Its subcellular location is the cell inner membrane. The enzyme catalyses di-trans,octa-cis-undecaprenyl diphospho-N-acetyl-alpha-D-muramoyl-L-alanyl-D-glutamyl-meso-2,6-diaminopimeloyl-D-alanyl-D-alanine + UDP-N-acetyl-alpha-D-glucosamine = di-trans,octa-cis-undecaprenyl diphospho-[N-acetyl-alpha-D-glucosaminyl-(1-&gt;4)]-N-acetyl-alpha-D-muramoyl-L-alanyl-D-glutamyl-meso-2,6-diaminopimeloyl-D-alanyl-D-alanine + UDP + H(+). The protein operates within cell wall biogenesis; peptidoglycan biosynthesis. Functionally, cell wall formation. Catalyzes the transfer of a GlcNAc subunit on undecaprenyl-pyrophosphoryl-MurNAc-pentapeptide (lipid intermediate I) to form undecaprenyl-pyrophosphoryl-MurNAc-(pentapeptide)GlcNAc (lipid intermediate II). The polypeptide is UDP-N-acetylglucosamine--N-acetylmuramyl-(pentapeptide) pyrophosphoryl-undecaprenol N-acetylglucosamine transferase (Pseudomonas aeruginosa (strain LESB58)).